The chain runs to 203 residues: RNA annealing protein YRA2 (203 aa).

At Met-1 the chain carries N-acetylmethionine. Disordered regions lie at residues Met-1–Pro-60 and Gln-137–Gly-203. Residues Asn-11–His-20 show a composition bias toward polar residues. Over residues Ser-47–Pro-60 the composition is skewed to basic and acidic residues. An RRM domain is found at Lys-64–Pro-138. Basic residues-rich tracts occupy residues Gln-139–Gln-153 and Gly-161–Gly-180.

This sequence belongs to the YRA1 family. Associates with mRNPs. Interacts with YRA1.

The protein resides in the nucleus. In terms of biological role, involved in export of poly(A) mRNAs from the nucleus. Recruited to the coding sequences as well as poly-A sites of active genes. This Saccharomyces cerevisiae (strain JAY291) (Baker's yeast) protein is RNA annealing protein YRA2 (YRA2).